A 69-amino-acid chain; its full sequence is Conotoxin Cal12.1p5 (69 aa).

Residues 1–23 constitute a propeptide that is removed on maturation; the sequence is DLITNSYTRGKPRHVTSWRNLKT.

In terms of processing, contains 4 disulfide bonds. In terms of tissue distribution, expressed by the venom duct.

It localises to the secreted. This Californiconus californicus (California cone) protein is Conotoxin Cal12.1p5.